Consider the following 702-residue polypeptide: Protein crooked neck (702 aa).

HAT repeat units follow at residues 56–88 (DYQQRKRKTFEDNLRKNRMVVSHWIKYAQWEEQ), 90–122 (QEIQRARSIWERALDNEHRNVTLWLKYAEMEMK), 124–156 (KQVNHARNLWDRAVTIMPRVNQFWYKYTYMEEM), 158–189 (ENVAGARQVFERWMEWQPEEQAWQTYVNFELR), 191–222 (KEIDRAREIYERFVYVHPDVKNWIKFARFEES), 224–259 (GFIHGSRRVFERAVEFFGDDYIEERLFIAFARFEEG), 261–295 (KEHDRARIIYKYALDHLPKDRTQELFKAYTKHEKK), 305–337 (VIVSKRKYQYEQEVAANPTNYDAWFDYLRLIEA), 339–373 (GDRDQIRETYERAISNVPPANEKNFWRRYIYLWIN), 383–419 (EDAERTRQIYKTCLELIPHKQFTFSKLWLLYAQFEIR), 454–486 (REFERCRMLYEKFLEFGPENCVTWMKFAELENL), 488–522 (GDTDRARAIFELAVQQPRLDMPELLWKAYIDFEVA), and 524–555 (GETELARQLYERLLERTQHVKVWMSFAKFEMG). Positions 620–628 (PRRIKKRQK) match the Nuclear localization signal motif. Positions 670-702 (KDNTVDDPPATAIASEPEPAADAAPADTTDSGD) are disordered. A compositionally biased stretch (low complexity) spans 683–702 (ASEPEPAADAAPADTTDSGD).

The protein belongs to the crooked-neck family. In terms of assembly, colocalizes with a complex containing snRNP proteins. In terms of tissue distribution, transcribed in all cells during embryonic development.

The protein resides in the nucleus speckle. Its function is as follows. May be involved in pre-mRNA splicing process. Involved in embryonic neurogenesis and cell rearrangement during Malpighian tubule morphogenesis. The polypeptide is Protein crooked neck (crn) (Drosophila melanogaster (Fruit fly)).